Consider the following 223-residue polypeptide: Endonuclease V (223 aa).

Residues Asp35 and Asp103 each coordinate Mg(2+).

This sequence belongs to the endonuclease V family. Mg(2+) serves as cofactor.

It localises to the cytoplasm. The enzyme catalyses Endonucleolytic cleavage at apurinic or apyrimidinic sites to products with a 5'-phosphate.. Functionally, DNA repair enzyme involved in the repair of deaminated bases. Selectively cleaves double-stranded DNA at the second phosphodiester bond 3' to a deoxyinosine leaving behind the intact lesion on the nicked DNA. The protein is Endonuclease V of Klebsiella pneumoniae subsp. pneumoniae (strain ATCC 700721 / MGH 78578).